A 469-amino-acid chain; its full sequence is MSAKAAPQDYFVKDISLAEYGRKEIAIAETEMPGLMAAREEFGPSQPLKGARICGSLHMTIQTAVLIQTLEALGAQVRWVSCNIYSTQDHAAAAIADAGTAVFAYKGETLEEYWDYTDRMFQWPDGEGPNLILDDGGDATMYLILGEKAESDPSFLEKPTSEEEKYFFAQIKKRLTASPGWFKKTKAGVRGVSEETTTGVNRLYQLEKRGELPFPAINVNDSVTKSKFDNKYGCKESLVDAIRRGTDVMMAGKKAFVAGYGDVGKGSAASLAGSGARVGVSEVDPICALQAAMDGFEVLTMDEAAPKFDIFVTATGNKDILTVDHMRAMKDMAIVCNIGHFDNEIQVEGLRNFQWTNIKPQVDMITFPDGKRIILLSEGRLVNLGNATGHPSFVMSASFTNQTLAQIELHLRGNEYDNKVYTLPKHLDEKVARLHLDKLGVQLTKLSGEQAAYIGVEQTGPFKPEHYRY.

Substrate contacts are provided by threonine 60, aspartate 135, and glutamate 195. Residue 196–198 (TTT) participates in NAD(+) binding. The substrate site is built by lysine 225 and aspartate 229. NAD(+)-binding positions include asparagine 230, 259 to 264 (GYGDVG), glutamate 282, asparagine 317, 338 to 340 (IGH), and asparagine 383.

It belongs to the adenosylhomocysteinase family. It depends on NAD(+) as a cofactor.

Its subcellular location is the cytoplasm. It carries out the reaction S-adenosyl-L-homocysteine + H2O = L-homocysteine + adenosine. Its pathway is amino-acid biosynthesis; L-homocysteine biosynthesis; L-homocysteine from S-adenosyl-L-homocysteine: step 1/1. In terms of biological role, may play a key role in the regulation of the intracellular concentration of adenosylhomocysteine. This chain is Adenosylhomocysteinase, found in Hyphomonas neptunium (strain ATCC 15444).